A 423-amino-acid polypeptide reads, in one-letter code: uncharacterized protein (423 aa).

It belongs to the asfivirus E423R family.

The protein localises to the virion. This is an uncharacterized protein from Ornithodoros (relapsing fever ticks).